Reading from the N-terminus, the 101-residue chain is Small ribosomal subunit protein uS14 (101 aa).

The protein belongs to the universal ribosomal protein uS14 family. In terms of assembly, part of the 30S ribosomal subunit. Contacts proteins S3 and S10.

Its function is as follows. Binds 16S rRNA, required for the assembly of 30S particles and may also be responsible for determining the conformation of the 16S rRNA at the A site. The polypeptide is Small ribosomal subunit protein uS14 (Leptothrix cholodnii (strain ATCC 51168 / LMG 8142 / SP-6) (Leptothrix discophora (strain SP-6))).